We begin with the raw amino-acid sequence, 20 residues long: Agglutinin beta-3 chain (20 aa).

The segment at 1–20 (GPNGKSQSIIVGPWGDRVTN) is disordered.

It belongs to the jacalin lectin family. As to quaternary structure, formed of four alpha chains and four beta chains.

Its function is as follows. D-galactose-specific lectin, binds the T-antigen structure Gal-beta1,3-GalNAc. The polypeptide is Agglutinin beta-3 chain (Maclura pomifera (Osage orange)).